Consider the following 249-residue polypeptide: Uridylate kinase (249 aa).

23 to 26 (KISG) is a binding site for ATP. An involved in allosteric activation by GTP region spans residues 31-36 (GDQGFG). G65 lines the UMP pocket. ATP is bound by residues G66 and R70. Residues D85 and 146–153 (TGNPYFTT) each bind UMP. Residues T173, Y179, and D182 each contribute to the ATP site.

The protein belongs to the UMP kinase family. As to quaternary structure, homohexamer.

The protein localises to the cytoplasm. The enzyme catalyses UMP + ATP = UDP + ADP. It functions in the pathway pyrimidine metabolism; CTP biosynthesis via de novo pathway; UDP from UMP (UMPK route): step 1/1. Its activity is regulated as follows. Allosterically activated by GTP. Inhibited by UTP. Functionally, catalyzes the reversible phosphorylation of UMP to UDP. The sequence is that of Uridylate kinase from Jannaschia sp. (strain CCS1).